The chain runs to 1026 residues: Multidrug resistance protein MdtC (1026 aa).

A run of 11 helical transmembrane segments spans residues 15 to 35 (ILIA…LPVA), 333 to 353 (EVEE…FLFL), 360 to 380 (LIPA…MYLC), 387 to 407 (LSLM…IVVL), 431 to 451 (VGFT…PLLL), 463 to 483 (FAVT…TLTP), 528 to 548 (LVGV…IAIP), 853 to 873 (LILI…LYES), 897 to 917 (LFNA…IGIV), 953 to 973 (PIMM…LSGG), and 984 to 1004 (ITIV…TPVV).

The protein belongs to the resistance-nodulation-cell division (RND) (TC 2.A.6) family. MdtC subfamily. In terms of assembly, part of a tripartite efflux system composed of MdtA, MdtB and MdtC. MdtC forms a heteromultimer with MdtB.

It is found in the cell inner membrane. This chain is Multidrug resistance protein MdtC, found in Salmonella newport (strain SL254).